Consider the following 835-residue polypeptide: Translation initiation factor IF-2 (835 aa).

Positions M1–A243 are disordered. Residues V43–A67 are compositionally biased toward low complexity. Basic and acidic residues-rich tracts occupy residues K85 to R147, E157 to E166, and E175 to R205. Residues P332–E500 form the tr-type G domain. The interval G341–T348 is G1. Residue G341–T348 coordinates GTP. The segment at G366–H370 is G2. The G3 stretch occupies residues D388–G391. Residues D388 to H392 and N442 to D445 each bind GTP. The interval N442–D445 is G4. A G5 region spans residues S478–K480.

It belongs to the TRAFAC class translation factor GTPase superfamily. Classic translation factor GTPase family. IF-2 subfamily.

The protein resides in the cytoplasm. In terms of biological role, one of the essential components for the initiation of protein synthesis. Protects formylmethionyl-tRNA from spontaneous hydrolysis and promotes its binding to the 30S ribosomal subunits. Also involved in the hydrolysis of GTP during the formation of the 70S ribosomal complex. The sequence is that of Translation initiation factor IF-2 from Ruegeria pomeroyi (strain ATCC 700808 / DSM 15171 / DSS-3) (Silicibacter pomeroyi).